The following is a 387-amino-acid chain: Gamma-butyrobetaine dioxygenase (387 aa).

C38, C40, C43, and H82 together coordinate Zn(2+). Residues H202, D204, and H347 each coordinate Fe cation. A Phosphoserine modification is found at S351.

This sequence belongs to the gamma-BBH/TMLD family. Requires Fe(2+) as cofactor. The cofactor is L-ascorbate. As to expression, expressed in the liver and in some extend in the testis and the epididymis.

It is found in the cytoplasm. The catalysed reaction is 4-(trimethylamino)butanoate + 2-oxoglutarate + O2 = carnitine + succinate + CO2. The protein operates within amine and polyamine biosynthesis; carnitine biosynthesis. Its function is as follows. Catalyzes the formation of L-carnitine from gamma-butyrobetaine. In Rattus norvegicus (Rat), this protein is Gamma-butyrobetaine dioxygenase (Bbox1).